The primary structure comprises 399 residues: Elongation factor Tu (399 aa).

The tr-type G domain occupies 10-209; that stretch reads NPHVNIGTIG…EVDSYIPTPE (200 aa). The interval 19 to 26 is G1; sequence GHVYHGKT. GTP is bound at residue 19–26; sequence GHVYHGKT. T26 lines the Mg(2+) pocket. A G2 region spans residues 60–64; that stretch reads GITIA. Positions 81–84 are G3; the sequence is DCPG. GTP-binding positions include 81 to 85 and 136 to 139; these read DCPGH and NKQD. The segment at 136–139 is G4; sequence NKQD. A G5 region spans residues 174 to 176; sequence SAL.

The protein belongs to the TRAFAC class translation factor GTPase superfamily. Classic translation factor GTPase family. EF-Tu/EF-1A subfamily. In terms of assembly, monomer.

The protein localises to the cytoplasm. The catalysed reaction is GTP + H2O = GDP + phosphate + H(+). GTP hydrolase that promotes the GTP-dependent binding of aminoacyl-tRNA to the A-site of ribosomes during protein biosynthesis. This chain is Elongation factor Tu, found in Helicobacter pylori (strain J99 / ATCC 700824) (Campylobacter pylori J99).